Consider the following 164-residue polypeptide: FMN reductase (NADH) RutF (164 aa).

It belongs to the non-flavoprotein flavin reductase family. RutF subfamily.

It carries out the reaction FMNH2 + NAD(+) = FMN + NADH + 2 H(+). In terms of biological role, catalyzes the reduction of FMN to FMNH2 which is used to reduce pyrimidine by RutA via the Rut pathway. The protein is FMN reductase (NADH) RutF of Escherichia coli O45:K1 (strain S88 / ExPEC).